Consider the following 318-residue polypeptide: DNA-directed RNA polymerase subunit alpha (318 aa).

Residues 1 to 232 (MAHQRIVGPT…NLFSPLQNVR (232 aa)) form an alpha N-terminal domain (alpha-NTD) region. Residues 246-318 (KMTEVLVEEL…HLPKEKFTKD (73 aa)) are alpha C-terminal domain (alpha-CTD).

This sequence belongs to the RNA polymerase alpha chain family. As to quaternary structure, in plastids the minimal PEP RNA polymerase catalytic core is composed of four subunits: alpha, beta, beta', and beta''. When a (nuclear-encoded) sigma factor is associated with the core the holoenzyme is formed, which can initiate transcription.

It localises to the plastid. The protein localises to the chloroplast. It carries out the reaction RNA(n) + a ribonucleoside 5'-triphosphate = RNA(n+1) + diphosphate. DNA-dependent RNA polymerase catalyzes the transcription of DNA into RNA using the four ribonucleoside triphosphates as substrates. The protein is DNA-directed RNA polymerase subunit alpha of Chlorokybus atmophyticus (Soil alga).